Here is a 127-residue protein sequence, read N- to C-terminus: UPF0102 protein NFA_41430 (127 aa).

This sequence belongs to the UPF0102 family.

In Nocardia farcinica (strain IFM 10152), this protein is UPF0102 protein NFA_41430.